Consider the following 240-residue polypeptide: L-isoleucine-4-hydroxylase (240 aa).

Fe cation-binding residues include histidine 159, aspartate 161, and histidine 212.

Belongs to the iron/ascorbate-dependent oxidoreductase family. L-ascorbate serves as cofactor. The cofactor is Fe(2+).

The catalysed reaction is L-isoleucine + 2-oxoglutarate + O2 = (4S)-4-hydroxy-L-isoleucine + succinate + CO2. Its function is as follows. Catalyzes the hydroxylation of L-isoleucine to produce (4S)-4-hydroxy-L-isoleucine. Can also catalyze the hydroxylation of L-leucine, L-norvaline, L-norleucine and L-allo-isoleucine, as well as the sulfoxidation of L-methionine, L-ethionine, S-methyl-L-cysteine, S-ethyl-L-cysteine, and S-allyl-L-cysteine. This chain is L-isoleucine-4-hydroxylase, found in Bacillus thuringiensis.